Here is a 70-residue protein sequence, read N- to C-terminus: Large ribosomal subunit protein eL38 (70 aa).

It belongs to the eukaryotic ribosomal protein eL38 family.

The polypeptide is Large ribosomal subunit protein eL38 (RpL38) (Plutella xylostella (Diamondback moth)).